The chain runs to 591 residues: MNQGKIITVSGPLVVASGMQEANIQDICRVGHLGLVGEIIEMRRDQASIQVYEETSGIGPGEPVVTTGCPLSVELGPGLISEMFDGIQRPLDRFQKATDSDFLIRGVAIPSLDRKAKWAFIPKLSVGQEVVAGDILGTVQETAVIEHRVMVPYKVSGTLVAIHAGDFTVTDTVYEIKQEDGSIYQGSLMQTWPVRQSRPVAQKLIPVEPLVTGQRVIDTFFPVTKGGAAAVPGPFGAGKTVVQHQIAKFANVDIVIYVGCGERGNEMTDVLNEFPELIDPNTGQSIMERTVLIANTSNMPVAAREASIYTGITIAEYFRDMGYSVAIMADSTSRWAEALREMSGRLQEIPGDEGYPAYLGSRIAEYYERAGRVRTLGSQEREGTITAIGAVSPPGGDISEPVTQNTLRIVKVFWGLDAPLAQRRHFPAINWLTSYSLYQDDVGSYIDRKQQSNWSNKVTRAMAILQREASLEEIVRLVGLDSLSEQDRLIMAVARQIREDYLQQNAFDSVDTFTSFPKQEAMLTNILTFNEEASKALSLGAYFNEIMEGTAQVRDRIARSKFIPEENLEQIKGLTQKVTKEIHHVLAKGGI.

233 to 240 provides a ligand contact to ATP; the sequence is GPFGAGKT.

This sequence belongs to the ATPase alpha/beta chains family.

It catalyses the reaction ATP + H2O + 4 H(+)(in) = ADP + phosphate + 5 H(+)(out). Functionally, produces ATP from ADP in the presence of a proton gradient across the membrane. The V-type alpha chain is a catalytic subunit. The polypeptide is V-type ATP synthase alpha chain (Streptococcus pyogenes serotype M49 (strain NZ131)).